A 492-amino-acid polypeptide reads, in one-letter code: NADH-quinone oxidoreductase subunit N (492 aa).

14 consecutive transmembrane segments (helical) span residues 12 to 32, 44 to 64, 76 to 96, 115 to 135, 138 to 158, 169 to 189, 212 to 232, 244 to 264, 272 to 292, 306 to 326, 334 to 354, 381 to 401, 416 to 438, and 463 to 483; these read LLPYAPIIAVVITVLVVMIAI, ISVVGLNIGLFILLGQMAGII, LFVIDNFAQFNMVIIFICALA, LYLLMLLSTVGALLMVCAQHL, FFMSLEMLSIPLYGMLSYTYM, YLVLSATASATLLMGMAFIYA, LILGAAMMMFGIAFKLSAAPF, PAPIATYLASVSKVAMMALAV, LLALPSVQMLLMVMATLSILL, LLGYSSIAHMGYVLIVIVSIG, SMYMAIYAFTSIGAFGVVTLM, TAVMTIMMLSLAGIPLTAGFI, WFLAAMIILGSAIGLFYYLRVLL, and IMVIAVTAIIVFFGVLPNSMI.

Belongs to the complex I subunit 2 family. In terms of assembly, NDH-1 is composed of 14 different subunits. Subunits NuoA, H, J, K, L, M, N constitute the membrane sector of the complex.

It is found in the cell inner membrane. The enzyme catalyses a quinone + NADH + 5 H(+)(in) = a quinol + NAD(+) + 4 H(+)(out). Its function is as follows. NDH-1 shuttles electrons from NADH, via FMN and iron-sulfur (Fe-S) centers, to quinones in the respiratory chain. The immediate electron acceptor for the enzyme in this species is believed to be ubiquinone. Couples the redox reaction to proton translocation (for every two electrons transferred, four hydrogen ions are translocated across the cytoplasmic membrane), and thus conserves the redox energy in a proton gradient. This Psychrobacter arcticus (strain DSM 17307 / VKM B-2377 / 273-4) protein is NADH-quinone oxidoreductase subunit N.